A 93-amino-acid polypeptide reads, in one-letter code: Large ribosomal subunit protein eL29 (93 aa).

Positions 1–31 are enriched in basic residues; the sequence is MAKSKNHSTHHKNRKDHRNGIKKAVVHKKTS. The tract at residues 1-33 is disordered; that stretch reads MAKSKNHSTHHKNRKDHRNGIKKAVVHKKTSSK.

It belongs to the eukaryotic ribosomal protein eL29 family.

The polypeptide is Large ribosomal subunit protein eL29 (rpl29) (Dictyostelium discoideum (Social amoeba)).